Reading from the N-terminus, the 371-residue chain is MFPKWFDKWNADNPTNIFGPAILIGVLGVAVFGAAAIVSIGNPAQTASMQTGPRGTGMHVAEFNVTRFAPDPTIEEYYTEAPYIPEGGEELAKDIYENVQVLGDLTDDNFNRVMTAMTQWIAPEEGCVYCHGEGDLETYGEDNLYTKVVARRMIQMTQNINENWDGHVNANAEVGVNCYTCHRGEHVPSEIWFNITPVTEATAGWASVQNRATPLSQSTSLPSNALEIYLTEYEAVNVHDLESRVAGVPNDVEVASIQKTEMTFSLMNYFSNSLGVNCVFCHNSRAFYDPGQHTPQWATALLGRQMVIEMNQEYLIPLEDEYPEDRLGPVYADAPKAACKTCHKGYQKPMQGLNVIADWPELATTEAPVYE.

Heme-binding residues include M114, C127, C130, H131, M153, H167, C178, C181, H182, M267, C278, C281, H282, C339, C342, and H343.

Component of the photosynthetic reaction center composed of protein subunits L (PufL), M (PufM), H (PuhA) and cytochrome C (PufC). The reaction center interacts with light-harvesting antenna complex LH1. Binds 4 heme groups per subunit.

The protein resides in the cellular chromatophore membrane. In terms of biological role, the reaction center of purple bacteria contains a tightly bound cytochrome molecule which re-reduces the photo oxidized primary electron donor. The chain is Photosynthetic reaction center cytochrome c subunit (pufC) from Roseobacter denitrificans (strain ATCC 33942 / OCh 114) (Erythrobacter sp. (strain OCh 114)).